The chain runs to 122 residues: Large ribosomal subunit protein uL14 (122 aa).

This sequence belongs to the universal ribosomal protein uL14 family. As to quaternary structure, part of the 50S ribosomal subunit. Forms a cluster with proteins L3 and L19. In the 70S ribosome, L14 and L19 interact and together make contacts with the 16S rRNA in bridges B5 and B8.

Functionally, binds to 23S rRNA. Forms part of two intersubunit bridges in the 70S ribosome. This is Large ribosomal subunit protein uL14 from Acaryochloris marina (strain MBIC 11017).